The primary structure comprises 562 residues: MFS-type transporter calB (562 aa).

The segment covering 1–16 (MDEVTRTAQRSPSITE) has biased composition (polar residues). Residues 1–45 (MDEVTRTAQRSPSITETHAGETKLAGPGEKEGDVESPVDPSADSE) are disordered. A helical transmembrane segment spans residues 57 to 77 (FAILASVTLSAFLMLLDGSII). N-linked (GlcNAc...) asparagine glycosylation is present at Asn-83. 13 consecutive transmembrane segments (helical) span residues 94-113 (IGWY…PLSG), 123-143 (WTYL…GVAN), 154-174 (VAGL…AGAV), 184-204 (GIYL…GGAL), 213-233 (CFYI…FLQV), 256-276 (LIGF…LYYG), 284-304 (SSQV…FALW), 329-349 (INGA…PIYF), 362-382 (VNTL…GVLV), 389-409 (LPFA…VTLF), 418-438 (WIGY…MGII), 451-471 (VGIA…VVVG), and 530-550 (VFYL…GMGW). Asn-557 carries an N-linked (GlcNAc...) asparagine glycan.

The protein belongs to the major facilitator superfamily. TCR/Tet family.

The protein resides in the cell membrane. In terms of biological role, MFS-type transporter; part of the gene cluster that mediates the biosynthesis of calbistrin A and related compounds. Calbistrin A is a secondary metabolite with an interesting structure that was recently found to have bioactivity against leukemia cells. It consists of two polyketides linked by an ester bond: a bicyclic decalin containing polyketide and a linear 12 carbon dioic acid structure. Required for the secretion of calbistrin A and calbistrin C, as well as of related compounds decumbenone A, B and C. This is MFS-type transporter calB from Penicillium decumbens.